Here is a 202-residue protein sequence, read N- to C-terminus: Superoxide dismutase [Mn] (202 aa).

Mn(2+) is bound by residues His27, His82, Asp164, and His168.

Belongs to the iron/manganese superoxide dismutase family. In terms of assembly, homodimer. Requires Mn(2+) as cofactor.

The catalysed reaction is 2 superoxide + 2 H(+) = H2O2 + O2. Functionally, destroys superoxide anion radicals which are normally produced within the cells and which are toxic to biological systems. The protein is Superoxide dismutase [Mn] (sodA) of Listeria ivanovii.